A 185-amino-acid polypeptide reads, in one-letter code: Iron-sulfur assembly protein 2 (185 aa).

The Fe cation site is built by Cys-89, Cys-175, and Cys-177.

The protein belongs to the HesB/IscA family.

The protein localises to the mitochondrion matrix. Functionally, involved in the assembly of mitochondrial and cytoplasmic iron-sulfur proteins. Probably involved in the binding of an intermediate of Fe/S cluster assembly. This is Iron-sulfur assembly protein 2 (ISA2) from Saccharomyces cerevisiae (strain ATCC 204508 / S288c) (Baker's yeast).